Here is a 651-residue protein sequence, read N- to C-terminus: Intraflagellar transport protein 70A (651 aa).

7 TPR repeats span residues 8-41 (DGEY…HTKS), 42-75 (RAAL…HPEV), 140-173 (PDYD…LGYQ), 175-207 (DLAY…GIRE), 379-410 (VTKQ…EKYI), 411-443 (PVLM…CNEH), and 445-478 (TWKL…HYEN). A coiled-coil region spans residues 494 to 521 (YIMTSQNEEAEELMRKIEKEEEQISYDD). The stretch at 530–563 (CIVNLVIGTLYCAKGNYDFGISRVIKSLEPYNKK) is one TPR 8 repeat.

This sequence belongs to the TTC30/dfy-1/fleer family. As to expression, localizes to the cilia of many ciliated epithelial cell types including pronephric cells, olfactory placode, the brain ventricle and lateral line organs.

It is found in the cell projection. The protein resides in the cilium. In terms of biological role, plays a role in anterograde intraflagellar transport (IFT), the process by which cilia precursors are transported from the base of the cilium to the site of their incorporation at the tip. Required for polyglutamylation of axonemal tubulin, which is a prerequisite for correct assembly of cilia and for normal cilia beat amplitude. Does not seem to be required for neuronal microtubule polyglutamylation. The protein is Intraflagellar transport protein 70A (ift70a) of Danio rerio (Zebrafish).